A 519-amino-acid polypeptide reads, in one-letter code: ATP synthase subunit alpha, mitochondrial (519 aa).

An ATP-binding site is contributed by Gly-188–Ser-195.

It belongs to the ATPase alpha/beta chains family. As to quaternary structure, F-type ATPases have 2 components, CF(1) - the catalytic core - and CF(0) - the membrane proton channel. CF(1) has five subunits: alpha(3), beta(3), gamma(1), delta(1), epsilon(1). CF(0) has three main subunits: a, b and c.

The protein resides in the mitochondrion. It is found in the mitochondrion inner membrane. Functionally, mitochondrial membrane ATP synthase (F(1)F(0) ATP synthase or Complex V) produces ATP from ADP in the presence of a proton gradient across the membrane which is generated by electron transport complexes of the respiratory chain. F-type ATPases consist of two structural domains, F(1) - containing the extramembraneous catalytic core, and F(0) - containing the membrane proton channel, linked together by a central stalk and a peripheral stalk. During catalysis, ATP synthesis in the catalytic domain of F(1) is coupled via a rotary mechanism of the central stalk subunits to proton translocation. Subunits alpha and beta form the catalytic core in F(1). Rotation of the central stalk against the surrounding alpha(3)beta(3) subunits leads to hydrolysis of ATP in three separate catalytic sites on the beta subunits. Subunit alpha does not bear the catalytic high-affinity ATP-binding sites. This chain is ATP synthase subunit alpha, mitochondrial (atp1), found in Dictyostelium citrinum (Slime mold).